We begin with the raw amino-acid sequence, 329 residues long: Putative 1-aminocyclopropane-1-carboxylate deaminase (329 aa).

Lys-54 carries the N6-(pyridoxal phosphate)lysine modification.

The protein belongs to the ACC deaminase/D-cysteine desulfhydrase family. Requires pyridoxal 5'-phosphate as cofactor.

The enzyme catalyses 1-aminocyclopropane-1-carboxylate + H2O = 2-oxobutanoate + NH4(+). The protein is Putative 1-aminocyclopropane-1-carboxylate deaminase of Pyrococcus furiosus (strain ATCC 43587 / DSM 3638 / JCM 8422 / Vc1).